The primary structure comprises 464 residues: Cysteine--tRNA ligase (464 aa).

C29 contributes to the Zn(2+) binding site. Positions 31–41 (ATVQGVPHIGH) match the 'HIGH' region motif. The interval 160–180 (RLDEVQQGESTASGKRDPRDF) is disordered. 3 residues coordinate Zn(2+): C208, H233, and E237. Positions 264 to 268 (KMSKS) match the 'KMSKS' region motif. K267 serves as a coordination point for ATP.

It belongs to the class-I aminoacyl-tRNA synthetase family. As to quaternary structure, monomer. Requires Zn(2+) as cofactor.

It localises to the cytoplasm. The catalysed reaction is tRNA(Cys) + L-cysteine + ATP = L-cysteinyl-tRNA(Cys) + AMP + diphosphate. The chain is Cysteine--tRNA ligase from Saccharopolyspora erythraea (strain ATCC 11635 / DSM 40517 / JCM 4748 / NBRC 13426 / NCIMB 8594 / NRRL 2338).